Here is a 630-residue protein sequence, read N- to C-terminus: tRNA uridine 5-carboxymethylaminomethyl modification enzyme MnmG (630 aa).

13-18 (GGGHAG) serves as a coordination point for FAD. Residue 273–287 (GPRYCPSIEDKVMRF) coordinates NAD(+).

The protein belongs to the MnmG family. Homodimer. Heterotetramer of two MnmE and two MnmG subunits. FAD serves as cofactor.

It is found in the cytoplasm. NAD-binding protein involved in the addition of a carboxymethylaminomethyl (cmnm) group at the wobble position (U34) of certain tRNAs, forming tRNA-cmnm(5)s(2)U34. The chain is tRNA uridine 5-carboxymethylaminomethyl modification enzyme MnmG from Actinobacillus pleuropneumoniae serotype 7 (strain AP76).